The sequence spans 1220 residues: DNA-directed RNA polymerase subunit beta (1220 aa).

It belongs to the RNA polymerase beta chain family. As to quaternary structure, the RNAP catalytic core consists of 2 alpha, 1 beta, 1 beta' and 1 omega subunit. When a sigma factor is associated with the core the holoenzyme is formed, which can initiate transcription.

It catalyses the reaction RNA(n) + a ribonucleoside 5'-triphosphate = RNA(n+1) + diphosphate. Its function is as follows. DNA-dependent RNA polymerase catalyzes the transcription of DNA into RNA using the four ribonucleoside triphosphates as substrates. This chain is DNA-directed RNA polymerase subunit beta, found in Mesomycoplasma hyopneumoniae (strain 7448) (Mycoplasma hyopneumoniae).